Reading from the N-terminus, the 127-residue chain is UPF0325 protein VP2321 (127 aa).

This sequence belongs to the UPF0325 family.

This Vibrio parahaemolyticus serotype O3:K6 (strain RIMD 2210633) protein is UPF0325 protein VP2321.